We begin with the raw amino-acid sequence, 340 residues long: 3-isopropylmalate dehydrogenase (340 aa).

Positions 88, 98, 122, and 212 each coordinate substrate. Residues aspartate 212, aspartate 236, and aspartate 240 each coordinate Mg(2+). An NAD(+)-binding site is contributed by 272–284 (GSAPDIMGKGIAD).

This sequence belongs to the isocitrate and isopropylmalate dehydrogenases family. LeuB type 2 subfamily. As to quaternary structure, homodimer. Requires Mg(2+) as cofactor. It depends on Mn(2+) as a cofactor.

The protein resides in the cytoplasm. It carries out the reaction (2R,3S)-3-isopropylmalate + NAD(+) = 4-methyl-2-oxopentanoate + CO2 + NADH. The protein operates within amino-acid biosynthesis; L-leucine biosynthesis; L-leucine from 3-methyl-2-oxobutanoate: step 3/4. In terms of biological role, catalyzes the oxidation of 3-carboxy-2-hydroxy-4-methylpentanoate (3-isopropylmalate) to 3-carboxy-4-methyl-2-oxopentanoate. The product decarboxylates to 4-methyl-2 oxopentanoate. This is 3-isopropylmalate dehydrogenase from Corynebacterium efficiens (strain DSM 44549 / YS-314 / AJ 12310 / JCM 11189 / NBRC 100395).